The primary structure comprises 260 residues: Thiazole synthase (260 aa).

The active-site Schiff-base intermediate with DXP is the lysine 100. 1-deoxy-D-xylulose 5-phosphate-binding positions include glycine 161, 187-188 (AG), and 209-210 (NT).

It belongs to the ThiG family. Homotetramer. Forms heterodimers with either ThiH or ThiS.

It is found in the cytoplasm. It carries out the reaction [ThiS sulfur-carrier protein]-C-terminal-Gly-aminoethanethioate + 2-iminoacetate + 1-deoxy-D-xylulose 5-phosphate = [ThiS sulfur-carrier protein]-C-terminal Gly-Gly + 2-[(2R,5Z)-2-carboxy-4-methylthiazol-5(2H)-ylidene]ethyl phosphate + 2 H2O + H(+). It participates in cofactor biosynthesis; thiamine diphosphate biosynthesis. Functionally, catalyzes the rearrangement of 1-deoxy-D-xylulose 5-phosphate (DXP) to produce the thiazole phosphate moiety of thiamine. Sulfur is provided by the thiocarboxylate moiety of the carrier protein ThiS. In vitro, sulfur can be provided by H(2)S. This chain is Thiazole synthase, found in Dechloromonas aromatica (strain RCB).